Reading from the N-terminus, the 183-residue chain is MAQRASRRPAAAAAAVVVAVVLAVSGGVGATPETACRAAAEEDRRVDYEFCVSRLSHHHDSPDADTWGLAKVAADVGVCIAGDAAYDAKAKLQAAKAGGEREALERCAELYDRMGSAFAAAYDDINRREYAAGKEKAGEAASLARRCDGAFADAGVAPSPLERQTAESVKIAIVCTAITNLVK.

Positions 1-30 are cleaved as a signal peptide; sequence MAQRASRRPAAAAAAVVVAVVLAVSGGVGA. 2 disulfides stabilise this stretch: cysteine 36–cysteine 51 and cysteine 107–cysteine 147.

It belongs to the PMEI family.

It is found in the secreted. It localises to the extracellular space. The protein resides in the apoplast. Functionally, pectin methylesterase (PME) inhibitor that inhibits PME in vitro. The sequence is that of Pectinesterase inhibitor 8 from Oryza sativa subsp. japonica (Rice).